Reading from the N-terminus, the 695-residue chain is Elongation factor G (695 aa).

A tr-type G domain is found at 10–289 (KNLRNIGIMA…AVVAWMPSPL (280 aa)). Residues 19-26 (AHIDAGKT), 83-87 (DTPGH), and 137-140 (NKMD) each bind GTP.

The protein belongs to the TRAFAC class translation factor GTPase superfamily. Classic translation factor GTPase family. EF-G/EF-2 subfamily.

Its subcellular location is the cytoplasm. Functionally, catalyzes the GTP-dependent ribosomal translocation step during translation elongation. During this step, the ribosome changes from the pre-translocational (PRE) to the post-translocational (POST) state as the newly formed A-site-bound peptidyl-tRNA and P-site-bound deacylated tRNA move to the P and E sites, respectively. Catalyzes the coordinated movement of the two tRNA molecules, the mRNA and conformational changes in the ribosome. This chain is Elongation factor G, found in Protochlamydia amoebophila (strain UWE25).